The chain runs to 569 residues: 2-succinyl-5-enolpyruvyl-6-hydroxy-3-cyclohexene-1-carboxylate synthase (569 aa).

It belongs to the TPP enzyme family. MenD subfamily. Homodimer. Requires Mg(2+) as cofactor. Mn(2+) is required as a cofactor. It depends on thiamine diphosphate as a cofactor.

It catalyses the reaction isochorismate + 2-oxoglutarate + H(+) = 5-enolpyruvoyl-6-hydroxy-2-succinyl-cyclohex-3-ene-1-carboxylate + CO2. Its pathway is quinol/quinone metabolism; 1,4-dihydroxy-2-naphthoate biosynthesis; 1,4-dihydroxy-2-naphthoate from chorismate: step 2/7. The protein operates within quinol/quinone metabolism; menaquinone biosynthesis. Functionally, catalyzes the thiamine diphosphate-dependent decarboxylation of 2-oxoglutarate and the subsequent addition of the resulting succinic semialdehyde-thiamine pyrophosphate anion to isochorismate to yield 2-succinyl-5-enolpyruvyl-6-hydroxy-3-cyclohexene-1-carboxylate (SEPHCHC). In Shewanella halifaxensis (strain HAW-EB4), this protein is 2-succinyl-5-enolpyruvyl-6-hydroxy-3-cyclohexene-1-carboxylate synthase.